The chain runs to 138 residues: Cysteine desulfuration protein SufE (138 aa).

Residue cysteine 51 is the Cysteine persulfide intermediate of the active site.

Belongs to the SufE family. As to quaternary structure, homodimer. Interacts with SufS.

The protein resides in the cytoplasm. Its pathway is cofactor biosynthesis; iron-sulfur cluster biosynthesis. Its function is as follows. Participates in cysteine desulfuration mediated by SufS. Cysteine desulfuration mobilizes sulfur from L-cysteine to yield L-alanine and constitutes an essential step in sulfur metabolism for biosynthesis of a variety of sulfur-containing biomolecules. Functions as a sulfur acceptor for SufS, by mediating the direct transfer of the sulfur atom from the S-sulfanylcysteine of SufS, an intermediate product of cysteine desulfuration process. The polypeptide is Cysteine desulfuration protein SufE (Shigella sonnei (strain Ss046)).